A 412-amino-acid polypeptide reads, in one-letter code: DNA replication and repair protein RecF (412 aa).

Position 30-37 (30-37 (GANGAGKT)) interacts with ATP. A disordered region spans residues 369–412 (LQVRPGGGTAAVTPDPEYARGEATAANGAASAPTGADAASTSRD). The span at 389 to 412 (GEATAANGAASAPTGADAASTSRD) shows a compositional bias: low complexity.

The protein belongs to the RecF family.

The protein localises to the cytoplasm. Its function is as follows. The RecF protein is involved in DNA metabolism; it is required for DNA replication and normal SOS inducibility. RecF binds preferentially to single-stranded, linear DNA. It also seems to bind ATP. This chain is DNA replication and repair protein RecF, found in Salinibacter ruber (strain DSM 13855 / M31).